The sequence spans 104 residues: Type IV secretion system protein PtlB homolog (104 aa).

Residues 30–50 (IALLGIWFSIAFLALFPVALL) traverse the membrane as a helical segment.

The protein belongs to the virB3 family.

The protein resides in the cell membrane. The chain is Type IV secretion system protein PtlB homolog (ptlB) from Bordetella bronchiseptica (strain ATCC BAA-588 / NCTC 13252 / RB50) (Alcaligenes bronchisepticus).